The chain runs to 127 residues: Holo-[acyl-carrier-protein] synthase (127 aa).

Mg(2+) is bound by residues aspartate 8 and glutamate 60.

This sequence belongs to the P-Pant transferase superfamily. AcpS family. Mg(2+) serves as cofactor.

It is found in the cytoplasm. It carries out the reaction apo-[ACP] + CoA = holo-[ACP] + adenosine 3',5'-bisphosphate + H(+). Functionally, transfers the 4'-phosphopantetheine moiety from coenzyme A to a Ser of acyl-carrier-protein. This is Holo-[acyl-carrier-protein] synthase from Marinomonas sp. (strain MWYL1).